Here is a 92-residue protein sequence, read N- to C-terminus: uncharacterized protein (92 aa).

Positions 24-89 constitute an HMA domain; it reads KQIVLKVKEM…AIHKLKYTAE (66 aa). Residues Cys-35 and Cys-38 each contribute to the a metal cation site.

This is an uncharacterized protein from Haemophilus influenzae (strain ATCC 51907 / DSM 11121 / KW20 / Rd).